The following is an 853-amino-acid chain: DNA mismatch repair protein MutS (853 aa).

Residue 614-621 (GPNMGGKS) participates in ATP binding.

The protein belongs to the DNA mismatch repair MutS family.

Functionally, this protein is involved in the repair of mismatches in DNA. It is possible that it carries out the mismatch recognition step. This protein has a weak ATPase activity. This chain is DNA mismatch repair protein MutS, found in Escherichia coli (strain SMS-3-5 / SECEC).